The primary structure comprises 94 residues: Cell division protein FtsB (94 aa).

Residues 1–3 lie on the Cytoplasmic side of the membrane; the sequence is MRW. A helical transmembrane segment spans residues 4 to 21; it reads LTVGLLAAIGLLQYPLWV. Residues 22-94 are Periplasmic-facing; that stretch reads GKGGWLKVWE…VQIPEKVPGK (73 aa). Residues 31-73 adopt a coiled-coil conformation; sequence EYDRQLQQQKEVTRKLEIRNAGLDAEVRDLKQGYDAIEERARF.

Belongs to the FtsB family. As to quaternary structure, part of a complex composed of FtsB, FtsL and FtsQ.

Its subcellular location is the cell inner membrane. In terms of biological role, essential cell division protein. May link together the upstream cell division proteins, which are predominantly cytoplasmic, with the downstream cell division proteins, which are predominantly periplasmic. In Dechloromonas aromatica (strain RCB), this protein is Cell division protein FtsB.